The sequence spans 57 residues: Large ribosomal subunit protein bL32 (57 aa).

Belongs to the bacterial ribosomal protein bL32 family.

The sequence is that of Large ribosomal subunit protein bL32 (rpmF) from Halalkalibacterium halodurans (strain ATCC BAA-125 / DSM 18197 / FERM 7344 / JCM 9153 / C-125) (Bacillus halodurans).